The following is a 629-amino-acid chain: tRNA uridine 5-carboxymethylaminomethyl modification enzyme MnmG (629 aa).

FAD contacts are provided by residues 13–18 (GGGHAG), Val-125, and Ser-180. 273–287 (GPRYCPSIEDKVMRF) serves as a coordination point for NAD(+). Gln-370 is a binding site for FAD.

Belongs to the MnmG family. As to quaternary structure, homodimer. Heterotetramer of two MnmE and two MnmG subunits. FAD is required as a cofactor.

Its subcellular location is the cytoplasm. Its function is as follows. NAD-binding protein involved in the addition of a carboxymethylaminomethyl (cmnm) group at the wobble position (U34) of certain tRNAs, forming tRNA-cmnm(5)s(2)U34. The protein is tRNA uridine 5-carboxymethylaminomethyl modification enzyme MnmG of Escherichia coli O157:H7.